We begin with the raw amino-acid sequence, 1068 residues long: WD repeat-containing protein on Y chromosome (1068 aa).

WD repeat units follow at residues 155-199 (DEVT…IRTA), 201-242 (SESI…RGPF), 322-361 (RIPL…EPSA), 365-404 (GHNG…LLQT), 455-494 (THAA…RKII), 507-546 (IIDI…VVRN), and 594-634 (FHTD…RRYS). The interval 657–687 (SKRLASRPTPGNHGLQMGRAGRSTVLNRPED) is disordered. WD repeat units follow at residues 746–785 (KTGD…VPET) and 829–868 (GHLK…LGTL). The interval 1026–1068 (SAINIKQPSRRRSDKTNDTRNVRTPRARDLIALEMSSSHASQS) is disordered. Positions 1039 to 1056 (DKTNDTRNVRTPRARDLI) are enriched in basic and acidic residues.

This chain is WD repeat-containing protein on Y chromosome, found in Drosophila yakuba (Fruit fly).